We begin with the raw amino-acid sequence, 363 residues long: Ribonuclease D (363 aa).

Residues 5-168 (ITHPSELTDR…AIHDELTRRL (164 aa)) enclose the 3'-5' exonuclease domain. Positions 208-288 (EPAAQRRLLR…NTPLPDEEHA (81 aa)) constitute an HRDC domain.

The protein belongs to the RNase D family. It depends on a divalent metal cation as a cofactor.

It is found in the cytoplasm. The enzyme catalyses Exonucleolytic cleavage that removes extra residues from the 3'-terminus of tRNA to produce 5'-mononucleotides.. Exonuclease involved in the 3' processing of various precursor tRNAs. Initiates hydrolysis at the 3'-terminus of an RNA molecule and releases 5'-mononucleotides. This chain is Ribonuclease D, found in Xanthomonas oryzae pv. oryzae (strain KACC10331 / KXO85).